Here is a 336-residue protein sequence, read N- to C-terminus: Serpentine receptor class gamma-13 (336 aa).

8 helical membrane passes run 32-52, 68-88, 93-113, 133-153, 156-176, 210-230, 246-266, and 277-297; these read LKYIIQVTLLSINFILNFLII, FFIIYAADLIMGMYMSLSEIL, FIYVTLLCPILAPYFFTPSIF, VFLSFNRMTCVVFPVGYSAIW, ILTPIIIVLFVLPIGIIWNVL, FIVSLILIIVISGVTLYALLI, TMVLSLEFSFLSVIQIYFAFF, and LLRVMYFTYDLLNFSTTIIFI.

This sequence belongs to the nematode receptor-like protein srg family.

The protein localises to the membrane. This Caenorhabditis elegans protein is Serpentine receptor class gamma-13 (srg-13).